The following is a 722-amino-acid chain: Polyribonucleotide nucleotidyltransferase (722 aa).

Mg(2+) is bound by residues aspartate 487 and aspartate 493. Residues 554–613 (PRMVSFKIHPDKIREVIGKGGATIQALTKETGCSIDIKDDGTVTIASTSAEGMAEAKARI) form the KH domain. The 69-residue stretch at 623 to 691 (GKIYEGPVVK…ERGRLRLSLK (69 aa)) folds into the S1 motif domain.

This sequence belongs to the polyribonucleotide nucleotidyltransferase family. It depends on Mg(2+) as a cofactor.

It is found in the cytoplasm. It catalyses the reaction RNA(n+1) + phosphate = RNA(n) + a ribonucleoside 5'-diphosphate. Involved in mRNA degradation. Catalyzes the phosphorolysis of single-stranded polyribonucleotides processively in the 3'- to 5'-direction. This chain is Polyribonucleotide nucleotidyltransferase, found in Polynucleobacter asymbioticus (strain DSM 18221 / CIP 109841 / QLW-P1DMWA-1) (Polynucleobacter necessarius subsp. asymbioticus).